A 423-amino-acid chain; its full sequence is F-box/LRR-repeat protein 2 (423 aa).

The F-box domain occupies 9–55; sequence GLINKKLPKELLLRIFSFLDIVTLCRCAQISKAWNILALDGSNWQRV. 13 LRR repeats span residues 61–87, 88–113, 114–139, 140–165, 166–191, 192–217, 218–243, 244–269, 270–295, 296–321, 322–350, 351–375, and 376–401; these read QTDV…SLRG, CIGV…NLNG, CTKI…DLTS, CVSV…NLSW, CDQI…LLRG, CTQL…NLQS, CSRI…CLSG, CSNL…EAAR, CSHL…DLEE, CVLI…SLSH, CELI…ELDN, CLLV…ELYD, and CQQV…AYFA. Residues 80–90 form an interaction with Calmodulin region; it reads LRKLSLRGCIG. K201 is covalently cross-linked (Glycyl lysine isopeptide (Lys-Gly) (interchain with G-Cter in ubiquitin)). A Phosphothreonine; by GSK3-beta modification is found at T404. C420 carries the S-geranylgeranyl cysteine lipid modification. Positions 420–423 match the CAAX motif motif; that stretch reads CVIL.

Part of the SCF (SKP1-CUL1-F-box) E3 ubiquitin-protein ligase complex SCF(FBXL2) composed of CUL1, SKP1, RBX1 and FBXL2. Interacts with calmodulin; may antagonize substrate ubiquitination by SCF(FBXL2). May interact with PIK3R1. Interacts with PTPN13. Phosphorylated by GSK-beta (GSK3B), promoting recognition by FBXO3, leading to its ubiquitination by the SCF(FBXO3) complex. Post-translationally, ubiquitinated at Lys-201 by the SCF(FBXO3) complex in response to lipopolysaccharide (LPS), leading to its degradation by the proteasome.

The protein localises to the membrane. The protein operates within protein modification; protein ubiquitination. Calcium-activated substrate recognition component of the SCF (SKP1-cullin-F-box protein) E3 ubiquitin-protein ligase complex, SCF(FBXL2), which mediates the ubiquitination and subsequent proteasomal degradation of target proteins. Unlike many F-box proteins, FBXL2 does not seem to target phosphodegron within its substrates but rather calmodulin-binding motifs and is thereby antagonized by calmodulin. This is the case for the cyclins CCND2 and CCND3 which polyubiquitination and subsequent degradation are inhibited by calmodulin. Through CCND2 and CCND3 degradation induces cell-cycle arrest in G(0). SCF(FBXL2) also mediates PIK3R2 ubiquitination and proteasomal degradation thereby regulating phosphatidylinositol 3-kinase signaling and autophagy. PCYT1A monoubiquitination by SCF(FBXL2) and subsequent degradation regulates synthesis of phosphatidylcholine, which is utilized for formation of membranes and of pulmonary surfactant. The SCF(FBXL2) complex acts as a regulator of inflammation by mediating ubiquitination and degradation of TRAF proteins (TRAF1, TRAF2, TRAF3, TRAF4, TRAF5 and TRAF6). The SCF(FBXL2) complex acts as a negative regulator of the NLRP3 inflammasome by mediating ubiquitination and degradation of NLRP3. This is F-box/LRR-repeat protein 2 from Mus musculus (Mouse).